A 447-amino-acid polypeptide reads, in one-letter code: UDP-N-acetylmuramoylalanine--D-glutamate ligase (447 aa).

112–118 (GTNGKST) serves as a coordination point for ATP.

This sequence belongs to the MurCDEF family.

Its subcellular location is the cytoplasm. The enzyme catalyses UDP-N-acetyl-alpha-D-muramoyl-L-alanine + D-glutamate + ATP = UDP-N-acetyl-alpha-D-muramoyl-L-alanyl-D-glutamate + ADP + phosphate + H(+). It functions in the pathway cell wall biogenesis; peptidoglycan biosynthesis. Functionally, cell wall formation. Catalyzes the addition of glutamate to the nucleotide precursor UDP-N-acetylmuramoyl-L-alanine (UMA). The sequence is that of UDP-N-acetylmuramoylalanine--D-glutamate ligase from Legionella pneumophila (strain Lens).